The sequence spans 451 residues: uncharacterized protein (451 aa).

Helical transmembrane passes span 13–33 (IGFVMAAAGSAIGLGAIWKFP), 41–61 (GGAFFLIFVLFTILLGYPLLV), 97–117 (ACFLVLSFYSVIGGWILLYIV), 142–162 (NPVQTLAAQLVFMALTVLVVA), 174–194 (AVMMPILFLLFILLVLRSLTL), 217–237 (ILFALGQAFFTLTLGVSVMVT), 255–275 (IVLMNIIVTLLAGLAIFPAVF), 299–319 (LPFGTLFFIGFLVAFLFAALT), 345–365 (WTSGLLIFLVGIPCCLSYGVL), 381–401 (FTVSNVLMPSGALLISLFIPL), and 429–449 (LLRFIVPLAIIIVFLNLIGIL).

The protein belongs to the sodium:neurotransmitter symporter (SNF) (TC 2.A.22) family.

The protein localises to the cell membrane. Putative sodium-dependent transporter. This is an uncharacterized protein from Bacillus subtilis (strain 168).